A 295-amino-acid chain; its full sequence is Light-independent protochlorophyllide reductase iron-sulfur ATP-binding protein (295 aa).

Residues Gly-39 to Thr-44 and Lys-68 contribute to the ATP site. Ser-43 is a binding site for Mg(2+). Cys-124 and Cys-158 together coordinate [4Fe-4S] cluster. Asn-209–Arg-210 is an ATP binding site.

This sequence belongs to the NifH/BchL/ChlL family. Homodimer. Protochlorophyllide reductase is composed of three subunits; ChlL, ChlN and ChlB. The cofactor is [4Fe-4S] cluster.

The catalysed reaction is chlorophyllide a + oxidized 2[4Fe-4S]-[ferredoxin] + 2 ADP + 2 phosphate = protochlorophyllide a + reduced 2[4Fe-4S]-[ferredoxin] + 2 ATP + 2 H2O. It functions in the pathway porphyrin-containing compound metabolism; chlorophyll biosynthesis (light-independent). Functionally, component of the dark-operative protochlorophyllide reductase (DPOR) that uses Mg-ATP and reduced ferredoxin to reduce ring D of protochlorophyllide (Pchlide) to form chlorophyllide a (Chlide). This reaction is light-independent. The L component serves as a unique electron donor to the NB-component of the complex, and binds Mg-ATP. This is Light-independent protochlorophyllide reductase iron-sulfur ATP-binding protein from Prochlorococcus marinus (strain MIT 9515).